The chain runs to 776 residues: DNA topoisomerase 1 (776 aa).

Residues 1–111 (MKLVIVESPA…VKSDDFFKRV (111 aa)) form the Toprim domain. Glutamate 7 and aspartate 80 together coordinate Mg(2+). A Topo IA-type catalytic domain is found at 132–568 (DTNLVNAQQA…FWSGFNHNIE (437 aa)). The segment at 166-171 (SAGRVQ) is interaction with DNA. The active-site O-(5'-phospho-DNA)-tyrosine intermediate is tyrosine 304. Residues 600–627 (CPSCNTGELSLKLGKFGAFLACSNYPEC) form a C4-type zinc finger.

The protein belongs to the type IA topoisomerase family. As to quaternary structure, monomer. It depends on Mg(2+) as a cofactor.

The enzyme catalyses ATP-independent breakage of single-stranded DNA, followed by passage and rejoining.. In terms of biological role, releases the supercoiling and torsional tension of DNA, which is introduced during the DNA replication and transcription, by transiently cleaving and rejoining one strand of the DNA duplex. Introduces a single-strand break via transesterification at a target site in duplex DNA. The scissile phosphodiester is attacked by the catalytic tyrosine of the enzyme, resulting in the formation of a DNA-(5'-phosphotyrosyl)-enzyme intermediate and the expulsion of a 3'-OH DNA strand. The free DNA strand then undergoes passage around the unbroken strand, thus removing DNA supercoils. Finally, in the religation step, the DNA 3'-OH attacks the covalent intermediate to expel the active-site tyrosine and restore the DNA phosphodiester backbone. This Rickettsia conorii (strain ATCC VR-613 / Malish 7) protein is DNA topoisomerase 1.